Here is a 289-residue protein sequence, read N- to C-terminus: MASGKEIRSKIASVKNTQKITRAMEMVAASKMRKAQDRMRASRPYADKIRNVIRHLAQAHQEYQHPYLTSREAKKVGFIIVSSDRGLCGGLNTNLFRTLLRTMREWDEKGVPVELCIIGQKANAFFRRFGGSIAAQATHLGDSPHVEDLIGTVKVMLDNYQEGNVDRLYLAFNEFVNTMTQRPEIEQLLPIDANVGKTDEKLEHRWDYLYEPEAKEVLDQVLIRYIESLVYQGVVENIACEQAARMVAMKAASDNAGGFIDDLQLAYNKARQAAITQELSEIVGGAAAL.

Belongs to the ATPase gamma chain family. In terms of assembly, F-type ATPases have 2 components, CF(1) - the catalytic core - and CF(0) - the membrane proton channel. CF(1) has five subunits: alpha(3), beta(3), gamma(1), delta(1), epsilon(1). CF(0) has three main subunits: a, b and c.

It is found in the cell inner membrane. In terms of biological role, produces ATP from ADP in the presence of a proton gradient across the membrane. The gamma chain is believed to be important in regulating ATPase activity and the flow of protons through the CF(0) complex. This Nitrosococcus oceani (strain ATCC 19707 / BCRC 17464 / JCM 30415 / NCIMB 11848 / C-107) protein is ATP synthase gamma chain.